We begin with the raw amino-acid sequence, 228 residues long: Urease accessory protein UreF (228 aa).

The protein belongs to the UreF family. UreD, UreF and UreG form a complex that acts as a GTP-hydrolysis-dependent molecular chaperone, activating the urease apoprotein by helping to assemble the nickel containing metallocenter of UreC. The UreE protein probably delivers the nickel.

Its subcellular location is the cytoplasm. Its function is as follows. Required for maturation of urease via the functional incorporation of the urease nickel metallocenter. The protein is Urease accessory protein UreF of Prochlorococcus marinus (strain MIT 9312).